Reading from the N-terminus, the 205-residue chain is Holliday junction branch migration complex subunit RuvA (205 aa).

Positions 1 to 64 (MIGRLRGVLV…EDAQLLYGFI (64 aa)) are domain I. Residues 65–143 (TKQERALFRL…SLMEASAGSE (79 aa)) form a domain II region. Residues 144–156 (REFVLQSNYSPTP) form a flexible linker region. The segment at 157–205 (TVNSAEEDAISALISLGYKPPQASKSVSAAYKEGMDSETLIKAALKSML) is domain III.

This sequence belongs to the RuvA family. In terms of assembly, homotetramer. Forms an RuvA(8)-RuvB(12)-Holliday junction (HJ) complex. HJ DNA is sandwiched between 2 RuvA tetramers; dsDNA enters through RuvA and exits via RuvB. An RuvB hexamer assembles on each DNA strand where it exits the tetramer. Each RuvB hexamer is contacted by two RuvA subunits (via domain III) on 2 adjacent RuvB subunits; this complex drives branch migration. In the full resolvosome a probable DNA-RuvA(4)-RuvB(12)-RuvC(2) complex forms which resolves the HJ.

It localises to the cytoplasm. Functionally, the RuvA-RuvB-RuvC complex processes Holliday junction (HJ) DNA during genetic recombination and DNA repair, while the RuvA-RuvB complex plays an important role in the rescue of blocked DNA replication forks via replication fork reversal (RFR). RuvA specifically binds to HJ cruciform DNA, conferring on it an open structure. The RuvB hexamer acts as an ATP-dependent pump, pulling dsDNA into and through the RuvAB complex. HJ branch migration allows RuvC to scan DNA until it finds its consensus sequence, where it cleaves and resolves the cruciform DNA. The chain is Holliday junction branch migration complex subunit RuvA from Shewanella sp. (strain W3-18-1).